A 294-amino-acid chain; its full sequence is Glyceraldehyde-3-phosphate dehydrogenase (294 aa).

Residues Asp19, Arg63, and Thr105 each contribute to the NAD(+) site. D-glyceraldehyde 3-phosphate contacts are provided by residues 134–136 (SCT) and Thr165. Cys135 acts as the Nucleophile in catalysis. At Lys177 the chain carries N6-acetyllysine. Residues 194–195 (TG) and Arg217 each bind D-glyceraldehyde 3-phosphate. Position 234 is an N6-acetyllysine (Lys234).

The protein belongs to the glyceraldehyde-3-phosphate dehydrogenase family. In terms of assembly, homotetramer.

It localises to the cytoplasm. It carries out the reaction D-glyceraldehyde 3-phosphate + phosphate + NAD(+) = (2R)-3-phospho-glyceroyl phosphate + NADH + H(+). Its pathway is carbohydrate degradation; glycolysis; pyruvate from D-glyceraldehyde 3-phosphate: step 1/5. Catalyzes the oxidative phosphorylation of glyceraldehyde 3-phosphate (G3P) to 1,3-bisphosphoglycerate (BPG) using the cofactor NAD. The first reaction step involves the formation of a hemiacetal intermediate between G3P and a cysteine residue, and this hemiacetal intermediate is then oxidized to a thioester, with concomitant reduction of NAD to NADH. The reduced NADH is then exchanged with the second NAD, and the thioester is attacked by a nucleophilic inorganic phosphate to produce BPG. This is Glyceraldehyde-3-phosphate dehydrogenase (gap) from Pseudescherichia vulneris (Escherichia vulneris).